Here is a 186-residue protein sequence, read N- to C-terminus: Peptidyl-tRNA hydrolase (186 aa).

A tRNA-binding site is contributed by Y14. H19 serves as the catalytic Proton acceptor. 3 residues coordinate tRNA: Y61, N63, and N107.

The protein belongs to the PTH family. In terms of assembly, monomer.

The protein localises to the cytoplasm. It catalyses the reaction an N-acyl-L-alpha-aminoacyl-tRNA + H2O = an N-acyl-L-amino acid + a tRNA + H(+). In terms of biological role, hydrolyzes ribosome-free peptidyl-tRNAs (with 1 or more amino acids incorporated), which drop off the ribosome during protein synthesis, or as a result of ribosome stalling. Its function is as follows. Catalyzes the release of premature peptidyl moieties from peptidyl-tRNA molecules trapped in stalled 50S ribosomal subunits, and thus maintains levels of free tRNAs and 50S ribosomes. The polypeptide is Peptidyl-tRNA hydrolase (Helicobacter pylori (strain J99 / ATCC 700824) (Campylobacter pylori J99)).